A 575-amino-acid chain; its full sequence is Serine/threonine-protein kinase YPK1 (575 aa).

Residues 1–53 (MMSWKFGKKFKEGGFLSGKHHSSNNNSPSDTSRSTTPTPGNPHPEDAVKPPVP) form a disordered region. Residues 23–38 (SNNNSPSDTSRSTTPT) show a composition bias toward low complexity. The 256-residue stretch at 245 to 500 (FELLKVIGKG…AQDIKNHPFF (256 aa)) folds into the Protein kinase domain. ATP is bound by residues 251-259 (IGKGSFGKV) and K274. D368 acts as the Proton acceptor in catalysis. One can recognise an AGC-kinase C-terminal domain in the interval 502–573 (KHINFTKLWN…SVSPLGESVG (72 aa)). A phosphoserine mark is found at S543 and S562.

This sequence belongs to the protein kinase superfamily. AGC Ser/Thr protein kinase family. RAC subfamily.

The enzyme catalyses L-seryl-[protein] + ATP = O-phospho-L-seryl-[protein] + ADP + H(+). The catalysed reaction is L-threonyl-[protein] + ATP = O-phospho-L-threonyl-[protein] + ADP + H(+). Probable serine/threonine-protein kinase which may act in the sphingolipid-mediated signaling pathway. May act downstream of TORC2 (TOR complex 2) and PDK1 to regulate sphingolipid metabolism. This Cryptococcus neoformans var. grubii serotype A (strain H99 / ATCC 208821 / CBS 10515 / FGSC 9487) (Filobasidiella neoformans var. grubii) protein is Serine/threonine-protein kinase YPK1.